Here is a 454-residue protein sequence, read N- to C-terminus: SH2 domain-containing protein 4A (454 aa).

4 disordered regions span residues 45–65, 107–131, 152–177, and 237–302; these read AMERKESLPVKPRPKKENGKS, EQEAEEPRKTHSEEFTNSLKTKSQY, KEELEQGSRPAPTLEEEKIRSLSSSS, and RKSK…AYPQ. Over residues 107 to 120 the composition is skewed to basic and acidic residues; sequence EQEAEEPRKTHSEE. A phosphoserine mark is found at serine 118 and serine 124. Residues 240-259 show a composition bias toward basic and acidic residues; sequence KAADEKRRSLAKQAREDYKR. Phosphoserine is present on residues serine 261 and serine 315. One can recognise an SH2 domain in the interval 347 to 440; it reads WFHGILTLKK…LGKELLLYPC (94 aa).

Interacts with ESR1. In terms of tissue distribution, ubiquitously expressed. Aberrantly expressed in some cancers.

The protein resides in the cytoplasm. Its function is as follows. Inhibits estrogen-induced cell proliferation by competing with PLCG for binding to ESR1, blocking the effect of estrogen on PLCG and repressing estrogen-induced proliferation. May play a role in T-cell development and function. In Homo sapiens (Human), this protein is SH2 domain-containing protein 4A (SH2D4A).